The sequence spans 241 residues: Lipoprotein-releasing system ATP-binding protein LolD 2 (241 aa).

Residues 6-241 (LDAQQLSKSY…YKSYEKSTAV (236 aa)) form the ABC transporter domain. 43-50 (GASGSGKT) serves as a coordination point for ATP.

The protein belongs to the ABC transporter superfamily. Lipoprotein translocase (TC 3.A.1.125) family. The complex is composed of two ATP-binding proteins (LolD) and two transmembrane proteins (LolC and LolE).

It localises to the cell inner membrane. Its function is as follows. Part of the ABC transporter complex LolCDE involved in the translocation of mature outer membrane-directed lipoproteins, from the inner membrane to the periplasmic chaperone, LolA. Responsible for the formation of the LolA-lipoprotein complex in an ATP-dependent manner. This Chlorobium chlorochromatii (strain CaD3) protein is Lipoprotein-releasing system ATP-binding protein LolD 2.